The primary structure comprises 102 residues: Large ribosomal subunit protein bL21 (102 aa).

Belongs to the bacterial ribosomal protein bL21 family. As to quaternary structure, part of the 50S ribosomal subunit. Contacts protein L20.

Its function is as follows. This protein binds to 23S rRNA in the presence of protein L20. The protein is Large ribosomal subunit protein bL21 of Trichlorobacter lovleyi (strain ATCC BAA-1151 / DSM 17278 / SZ) (Geobacter lovleyi).